Here is a 157-residue protein sequence, read N- to C-terminus: uncharacterized protein (157 aa).

Residues 9 to 154 form the N-acetyltransferase domain; sequence LLINYKTLDE…ETNLNAVTNE (146 aa).

This is an uncharacterized protein from Bacillus cereus (strain G9842).